We begin with the raw amino-acid sequence, 801 residues long: Transferrin receptor protein 2 (801 aa).

The Cytoplasmic portion of the chain corresponds to 1–83 (MERLWGLFQR…WAAAGRRAAP (83 aa)). The segment at 16-45 (PRSSQTVYQRVEGPRKGHLEEEEEDGEEGA) is disordered. Residues 23 to 26 (YQRV) carry the Endocytosis signal motif. Residues 35-45 (EEEEEDGEEGA) are compositionally biased toward acidic residues. The helical; Signal-anchor for type II membrane protein transmembrane segment at 84 to 104 (YLVLTALLIFTGAFLLGYVAF) threads the bilayer. The Extracellular portion of the chain corresponds to 105–801 (RGSCQACGDS…GDVWNIDNNF (697 aa)). N-linked (GlcNAc...) asparagine glycans are attached at residues asparagine 240, asparagine 339, asparagine 540, and asparagine 754.

This sequence belongs to the peptidase M28 family. M28B subfamily. Homodimer. Predominantly expressed in liver. While the alpha form is also expressed in spleen, lung, muscle, prostate and peripheral blood mononuclear cells, the beta form is expressed in all tissues tested, albeit weakly.

The protein resides in the cell membrane. It localises to the cytoplasm. Its function is as follows. Mediates cellular uptake of transferrin-bound iron in a non-iron dependent manner. May be involved in iron metabolism, hepatocyte function and erythrocyte differentiation. The polypeptide is Transferrin receptor protein 2 (TFR2) (Homo sapiens (Human)).